The following is a 299-amino-acid chain: Coenzyme PQQ synthesis protein B (299 aa).

It belongs to the PqqB family.

It functions in the pathway cofactor biosynthesis; pyrroloquinoline quinone biosynthesis. May be involved in the transport of PQQ or its precursor to the periplasm. The protein is Coenzyme PQQ synthesis protein B of Xanthomonas euvesicatoria pv. vesicatoria (strain 85-10) (Xanthomonas campestris pv. vesicatoria).